The following is a 228-amino-acid chain: 2,3-bisphosphoglycerate-dependent phosphoglycerate mutase (228 aa).

Residues 8–15, 21–22, Arg60, 87–90, Lys98, 114–115, and 183–184 each bind substrate; these read RHGQSEWN, TG, ERHY, RR, and GN. The active-site Tele-phosphohistidine intermediate is His9. Glu87 functions as the Proton donor/acceptor in the catalytic mechanism.

It belongs to the phosphoglycerate mutase family. BPG-dependent PGAM subfamily.

The catalysed reaction is (2R)-2-phosphoglycerate = (2R)-3-phosphoglycerate. The protein operates within carbohydrate degradation; glycolysis; pyruvate from D-glyceraldehyde 3-phosphate: step 3/5. Functionally, catalyzes the interconversion of 2-phosphoglycerate and 3-phosphoglycerate. In Staphylococcus haemolyticus (strain JCSC1435), this protein is 2,3-bisphosphoglycerate-dependent phosphoglycerate mutase.